Reading from the N-terminus, the 63-residue chain is Large ribosomal subunit protein uL29 (63 aa).

This sequence belongs to the universal ribosomal protein uL29 family.

The chain is Large ribosomal subunit protein uL29 from Idiomarina loihiensis (strain ATCC BAA-735 / DSM 15497 / L2-TR).